A 357-amino-acid polypeptide reads, in one-letter code: Protein pelota homolog (357 aa).

It belongs to the eukaryotic release factor 1 family. Pelota subfamily. In terms of assembly, monomer. Requires a divalent metal cation as cofactor.

The protein resides in the cytoplasm. In terms of biological role, may function in recognizing stalled ribosomes, interact with stem-loop structures in stalled mRNA molecules, and effect endonucleolytic cleavage of the mRNA. May play a role in the release non-functional ribosomes and degradation of damaged mRNAs. Has endoribonuclease activity. The protein is Protein pelota homolog of Methanocella arvoryzae (strain DSM 22066 / NBRC 105507 / MRE50).